The following is a 362-amino-acid chain: Leucoanthocyanidin dioxygenase (362 aa).

The Fe2OG dioxygenase domain occupies 211-313 (MEELLLQKKI…RISWAVFCEP (103 aa)). Residues His-238, Asp-240, and His-294 each contribute to the Fe cation site.

This sequence belongs to the iron/ascorbate-dependent oxidoreductase family. It depends on Fe cation as a cofactor. Requires L-ascorbate as cofactor.

The enzyme catalyses a (2R,3S,4S)-leucoanthocyanidin + 2-oxoglutarate + O2 = a 4-H-anthocyanidin with a 3-hydroxy group + succinate + CO2 + 2 H2O. The protein operates within pigment biosynthesis; anthocyanin biosynthesis. Its function is as follows. Oxidation of leucoanthocyanidins into anthocyanidins. The sequence is that of Leucoanthocyanidin dioxygenase from Vitis vinifera (Grape).